The following is a 232-amino-acid chain: LexA repressor (232 aa).

The segment at residues 26–46 is a DNA-binding region (H-T-H motif); the sequence is FDEMKDALDLRSKSGIHRLIT. Residues Ser-153 and Lys-191 each act as for autocatalytic cleavage activity in the active site.

This sequence belongs to the peptidase S24 family. In terms of assembly, homodimer.

The enzyme catalyses Hydrolysis of Ala-|-Gly bond in repressor LexA.. In terms of biological role, represses a number of genes involved in the response to DNA damage (SOS response), including recA and lexA. In the presence of single-stranded DNA, RecA interacts with LexA causing an autocatalytic cleavage which disrupts the DNA-binding part of LexA, leading to derepression of the SOS regulon and eventually DNA repair. The polypeptide is LexA repressor (Afipia carboxidovorans (strain ATCC 49405 / DSM 1227 / KCTC 32145 / OM5) (Oligotropha carboxidovorans)).